We begin with the raw amino-acid sequence, 322 residues long: tRNA uridine(34) hydroxylase (322 aa).

A Rhodanese domain is found at 125–219; it reads QQEDTIVVDA…YGKDPEVQGE (95 aa). Cysteine 179 functions as the Cysteine persulfide intermediate in the catalytic mechanism.

Belongs to the TrhO family.

It carries out the reaction uridine(34) in tRNA + AH2 + O2 = 5-hydroxyuridine(34) in tRNA + A + H2O. Its function is as follows. Catalyzes oxygen-dependent 5-hydroxyuridine (ho5U) modification at position 34 in tRNAs. The protein is tRNA uridine(34) hydroxylase of Bacillus licheniformis (strain ATCC 14580 / DSM 13 / JCM 2505 / CCUG 7422 / NBRC 12200 / NCIMB 9375 / NCTC 10341 / NRRL NRS-1264 / Gibson 46).